The primary structure comprises 1075 residues: Protein nervous wreck (1075 aa).

Residues 11–289 form the F-BAR domain; the sequence is VKFLKNLHTE…QAQQLTREYN (279 aa). Disordered stretches follow at residues 361-381 and 431-536; these read LRDSGQRTDPNDPNGPDLDTK and SASS…DEPI. Polar residues predominate over residues 431–453; it reads SASSISMRTDASGQGENPSSDSF. The span at 469–482 shows a compositional bias: basic and acidic residues; the sequence is PKQEQQLSRDRTFS. A compositionally biased stretch (low complexity) spans 493–512; it reads SAAAASSAAAASSSMMASSA. SH3 domains are found at residues 542–603 and 658–721; these read EAIF…IDQE and SDVE…ECDE. Disordered stretches follow at residues 722–747, 769–837, and 864–917; these read MGEPLSEGGDESPPPTAAPTFALPPA, SQDT…EKGA, and GADK…EGNA. Pro residues-rich tracts occupy residues 733–747 and 809–818; these read SPPPTAAPTFALPPA and QPPPSLPPPQ. Low complexity predominate over residues 819 to 837; that stretch reads LAKAGGSAPGSGSKVEKGA. Positions 883–897 are enriched in basic and acidic residues; that stretch reads VSKEQPAEVAKKPDI.

Homodimer. Interacts (via SH3 domain 1) with WASp. Interacts (via SH3 domain 1) with shi/dynamin. Interacts (via SH3 domain 2) with Dap160. Interacts (via F-BAR domain) with SH3PX1. Interacts (via SH3 domain 2) with Snx16. Identified in a complex with Syn and Syt1. Detected in larval body wall muscle. Detected at the neuromuscular junction, on motoneuron axons and axon terminals, at synaptic boutons in the periactive zone surrounding the synapse (at protein level). Detected on motoneuron axons and axon terminals, at synaptic boutons in the periactive zone surrounding the synapse.

It is found in the endomembrane system. It localises to the synapse. The protein resides in the cell projection. The protein localises to the axon. Its subcellular location is the presynaptic cell membrane. It is found in the cytoplasmic vesicle. It localises to the secretory vesicle. The protein resides in the synaptic vesicle. The protein localises to the recycling endosome. Functionally, adapter protein that provides a link between vesicular membrane traffic and the actin assembly machinery. Acts together with Cdc42 to stimulate actin nucleation mediated by WASp and the ARP2/3 complex. Binds to membranes enriched in phosphatidylinositol 4,5-bisphosphate and causes local membrane deformation. Required for normal structure and function of synapses at the neuromuscular junction. Plays a role in synaptic vesicle trafficking. Required for the release of a normal number of synaptic vesicles per action potential. The sequence is that of Protein nervous wreck from Drosophila melanogaster (Fruit fly).